Here is a 478-residue protein sequence, read N- to C-terminus: tRNA modification GTPase MnmE (478 aa).

(6S)-5-formyl-5,6,7,8-tetrahydrofolate is bound by residues Arg-36, Glu-94, and Lys-133. A TrmE-type G domain is found at 230–402; that stretch reads GIHVVLAGRP…LVETLCAKVG (173 aa). A K(+)-binding site is contributed by Asn-240. GTP contacts are provided by residues 240–245, 259–265, and 284–287; these read NAGKSS, TDVAGTT, and DTAG. Ser-244 provides a ligand contact to Mg(2+). Residues Thr-259, Val-261, and Thr-264 each contribute to the K(+) site. Thr-265 provides a ligand contact to Mg(2+). Lys-478 is a binding site for (6S)-5-formyl-5,6,7,8-tetrahydrofolate.

This sequence belongs to the TRAFAC class TrmE-Era-EngA-EngB-Septin-like GTPase superfamily. TrmE GTPase family. Homodimer. Heterotetramer of two MnmE and two MnmG subunits. K(+) serves as cofactor.

It is found in the cytoplasm. Exhibits a very high intrinsic GTPase hydrolysis rate. Involved in the addition of a carboxymethylaminomethyl (cmnm) group at the wobble position (U34) of certain tRNAs, forming tRNA-cmnm(5)s(2)U34. The sequence is that of tRNA modification GTPase MnmE from Psychrobacter arcticus (strain DSM 17307 / VKM B-2377 / 273-4).